Reading from the N-terminus, the 153-residue chain is Ribosome maturation factor RimP (153 aa).

The protein belongs to the RimP family.

The protein resides in the cytoplasm. In terms of biological role, required for maturation of 30S ribosomal subunits. This chain is Ribosome maturation factor RimP, found in Desulforamulus reducens (strain ATCC BAA-1160 / DSM 100696 / MI-1) (Desulfotomaculum reducens).